A 458-amino-acid chain; its full sequence is UDP-N-acetylmuramate--L-alanine ligase (458 aa).

112–118 (GTHGKTT) provides a ligand contact to ATP.

It belongs to the MurCDEF family.

The protein localises to the cytoplasm. It carries out the reaction UDP-N-acetyl-alpha-D-muramate + L-alanine + ATP = UDP-N-acetyl-alpha-D-muramoyl-L-alanine + ADP + phosphate + H(+). The protein operates within cell wall biogenesis; peptidoglycan biosynthesis. In terms of biological role, cell wall formation. The polypeptide is UDP-N-acetylmuramate--L-alanine ligase (Geotalea uraniireducens (strain Rf4) (Geobacter uraniireducens)).